The primary structure comprises 191 residues: Pyridoxal 5'-phosphate synthase subunit PdxT (191 aa).

L-glutamine is bound at residue 46 to 48 (GES). The Nucleophile role is filled by Cys78. Residues Arg105 and 134–135 (IR) each bind L-glutamine. Active-site charge relay system residues include His170 and Glu172.

Belongs to the glutaminase PdxT/SNO family. In the presence of PdxS, forms a dodecamer of heterodimers. Only shows activity in the heterodimer.

It catalyses the reaction aldehydo-D-ribose 5-phosphate + D-glyceraldehyde 3-phosphate + L-glutamine = pyridoxal 5'-phosphate + L-glutamate + phosphate + 3 H2O + H(+). It carries out the reaction L-glutamine + H2O = L-glutamate + NH4(+). Its pathway is cofactor biosynthesis; pyridoxal 5'-phosphate biosynthesis. Functionally, catalyzes the hydrolysis of glutamine to glutamate and ammonia as part of the biosynthesis of pyridoxal 5'-phosphate. The resulting ammonia molecule is channeled to the active site of PdxS. This Carboxydothermus hydrogenoformans (strain ATCC BAA-161 / DSM 6008 / Z-2901) protein is Pyridoxal 5'-phosphate synthase subunit PdxT.